The sequence spans 280 residues: Tobamovirus multiplication protein 2A (280 aa).

Over 1–13 the chain is Cytoplasmic; sequence MACRGCLECLLKL. The helical transmembrane segment at 14 to 34 threads the bilayer; the sequence is LNFLLAVAGLGMIGYGIYLFV. Topologically, residues 35–78 are extracellular; that stretch reads EYKRVTDNSVTFDLTNGDQSYVSFGRPILMAVSLSSNIFDNLPK. Residues 79–99 traverse the membrane as a helical segment; that stretch reads AWFIYLFIGIGVALFVISCCG. The Cytoplasmic portion of the chain corresponds to 100-113; sequence CVGTCSRSVCCLSC. The helical transmembrane segment at 114-134 threads the bilayer; the sequence is YSLLLILLILVELGFAAFIFF. Topologically, residues 135-162 are extracellular; that stretch reads DNSWRDELPSDRTGNFDTIYNFLRENWK. A helical membrane pass occupies residues 163–183; the sequence is IVRWVALGAVVFEALLFLLAL. Residues 184 to 280 are Cytoplasmic-facing; that stretch reads MVRAANTPAE…NEEKGRCTIM (97 aa). Residues Ser-196 and Ser-233 each carry the phosphoserine modification. Residues 258–280 are disordered; it reads SESHRFQQMPAQPNEEKGRCTIM. The span at 271 to 280 shows a compositional bias: basic and acidic residues; the sequence is NEEKGRCTIM.

It belongs to the tetraspanin (TM4SF) family. In terms of assembly, homodimer. Constituent of tobamovirus replication complex. Interacts with TOM1. Expressed in rosette leaves.

The protein resides in the vacuole membrane. Necessary for the efficient intracellular multiplication of tobamoviruses, being a component of the replication complex. The polypeptide is Tobamovirus multiplication protein 2A (TOM2A) (Arabidopsis thaliana (Mouse-ear cress)).